Reading from the N-terminus, the 126-residue chain is Aspartate 1-decarboxylase (126 aa).

Serine 25 serves as the catalytic Schiff-base intermediate with substrate; via pyruvic acid. A Pyruvic acid (Ser) modification is found at serine 25. Threonine 57 is a substrate binding site. Tyrosine 58 functions as the Proton donor in the catalytic mechanism. 73 to 75 (GGA) serves as a coordination point for substrate.

Belongs to the PanD family. In terms of assembly, heterooctamer of four alpha and four beta subunits. Pyruvate serves as cofactor. Is synthesized initially as an inactive proenzyme, which is activated by self-cleavage at a specific serine bond to produce a beta-subunit with a hydroxyl group at its C-terminus and an alpha-subunit with a pyruvoyl group at its N-terminus.

Its subcellular location is the cytoplasm. It catalyses the reaction L-aspartate + H(+) = beta-alanine + CO2. It functions in the pathway cofactor biosynthesis; (R)-pantothenate biosynthesis; beta-alanine from L-aspartate: step 1/1. Catalyzes the pyruvoyl-dependent decarboxylation of aspartate to produce beta-alanine. This chain is Aspartate 1-decarboxylase, found in Stenotrophomonas maltophilia (strain K279a).